Consider the following 247-residue polypeptide: PF03932 family protein CutC (247 aa).

It belongs to the CutC family.

It is found in the cytoplasm. This is PF03932 family protein CutC from Enterobacter sp. (strain 638).